Consider the following 249-residue polypeptide: tRNA pseudouridine synthase A (249 aa).

The active-site Nucleophile is Asp-53. Tyr-111 contacts substrate.

Belongs to the tRNA pseudouridine synthase TruA family. As to quaternary structure, homodimer.

It carries out the reaction uridine(38/39/40) in tRNA = pseudouridine(38/39/40) in tRNA. In terms of biological role, formation of pseudouridine at positions 38, 39 and 40 in the anticodon stem and loop of transfer RNAs. The sequence is that of tRNA pseudouridine synthase A from Streptococcus equi subsp. equi (strain 4047).